We begin with the raw amino-acid sequence, 427 residues long: Gustatory receptor for sugar taste 43a (427 aa).

Over 1–37 the chain is Cytoplasmic; it reads MEISQPSIGIFYISKVLALAPYATVRNSKGRVEIGRS. Residues 38 to 63 traverse the membrane as a helical segment; sequence WLFTVYSATLTVVMVFLTYRGLLFDA. At 64 to 75 the chain is on the extracellular side; sequence NSEIPVRMKSAT. Residues arginine 70 and aspartate 83 each coordinate beta-D-fructose. A helical membrane pass occupies residues 76-96; that stretch reads SKVVTALDVSVVVMAIVSGVY. The Cytoplasmic segment spans residues 97–135; that stretch reads CGLFSLNDTLELNDRLNKIDNTLNAYNNFRRDRWRALGM. The helical transmembrane segment at 136 to 158 threads the bilayer; that stretch reads AAVSLLAISILVGLDVGTWMRIA. Residues 159–168 are Extracellular-facing; it reads QDMNIAQSDT. The helical transmembrane segment at 169–193 threads the bilayer; sequence ELNVHWYIPFYSLYFILTGLQVNIA. Residue tyrosine 182 participates in beta-D-fructose binding. The Cytoplasmic portion of the chain corresponds to 194–293; sequence NTAYGLGRRF…CVHLLSNSFG (100 aa). Residues 294–316 traverse the membrane as a helical segment; the sequence is IAVLFILVSCLLHLVATAYFLFL. Threonine 310 provides a ligand contact to beta-D-fructose. Residues 317–324 are Extracellular-facing; it reads ELLSKRDN. A helical membrane pass occupies residues 325–346; sequence GYLWVQMLWICFHFLRLLMVVE. Residue histidine 337 coordinates beta-D-fructose. Topologically, residues 347–402 are cytoplasmic; that stretch reads PCHLAARESRKTIQIVCEIERKVHEPILAEAVKKFWQQLLVVDADFSACGLCRVNR. The chain crosses the membrane as a helical span at residues 403–423; the sequence is TILTSFASAIATYLVILIQFQ. Residue glutamine 421 coordinates Ca(2+). Topologically, residues 424-427 are extracellular; sequence RTNG.

This sequence belongs to the insect chemoreceptor superfamily. Gustatory receptor (GR) family. Gr21a subfamily. Homotetramer. Expressed in the adult labellar chemosensory neurons and in the adult head, abdomen, leg and wing. In larvae, is expressed in taste organs, as well as the brain and the gastrointestinal system.

Its subcellular location is the cell membrane. Its function is as follows. Gustatory receptor which mediates acceptance or avoidance behavior, depending on its substrates. Gr43a is the main sugar receptor in larvae. Functions as a narrowly tuned fructose receptor in taste neurons but also as a fructose receptor in the brain. Necessary and sufficient to sense hemolymph fructose and promote feeding in hungry flies but suppress feeding in satiated flies. The protein is Gustatory receptor for sugar taste 43a (Gr43a) of Drosophila melanogaster (Fruit fly).